The primary structure comprises 428 residues: Elongation factor 1-alpha (428 aa).

The tr-type G domain occupies 5 to 225; the sequence is KPILNVAFIG…DAFQPPEKPT (221 aa). A G1 region spans residues 14 to 21; sequence GHVDAGKS. Residue 14–21 coordinates GTP; the sequence is GHVDAGKS. Serine 21 lines the Mg(2+) pocket. The interval 70–74 is G2; that stretch reads GVTID. Residues 91–94 form a G3 region; it reads DCPG. Residues 91–95 and 149–152 each bind GTP; these read DCPGH and NKMD. The G4 stretch occupies residues 149-152; the sequence is NKMD. The G5 stretch occupies residues 189–191; it reads ASL.

The protein belongs to the TRAFAC class translation factor GTPase superfamily. Classic translation factor GTPase family. EF-Tu/EF-1A subfamily.

The protein resides in the cytoplasm. It carries out the reaction GTP + H2O = GDP + phosphate + H(+). Functionally, GTP hydrolase that promotes the GTP-dependent binding of aminoacyl-tRNA to the A-site of ribosomes during protein biosynthesis. The sequence is that of Elongation factor 1-alpha from Methanococcus maripaludis (strain C6 / ATCC BAA-1332).